Reading from the N-terminus, the 709-residue chain is F-box only protein 40 (709 aa).

The segment at Glu53–His112 adopts a TRAF-type zinc-finger fold. The interval Thr232–Thr280 is disordered. 2 stretches are compositionally biased toward basic and acidic residues: residues Ser240 to Gln250 and Gly262 to Asp277. Residues Gln570–Lys624 enclose the F-box domain.

Directly interacts with SKP1 and CUL1. In terms of tissue distribution, expressed only in heart and skeletal muscle.

It localises to the cytoplasm. Probable substrate-recognition component of the SCF (SKP1-CUL1-F-box protein)-type E3 ubiquitin ligase complex that may function in myogenesis. The protein is F-box only protein 40 (FBXO40) of Homo sapiens (Human).